Consider the following 427-residue polypeptide: Trigger factor (427 aa).

One can recognise a PPIase FKBP-type domain in the interval 165-250 (GDTVVIDFEG…LHEIQEQVPA (86 aa)).

It belongs to the FKBP-type PPIase family. Tig subfamily.

It is found in the cytoplasm. The catalysed reaction is [protein]-peptidylproline (omega=180) = [protein]-peptidylproline (omega=0). Its function is as follows. Involved in protein export. Acts as a chaperone by maintaining the newly synthesized protein in an open conformation. Functions as a peptidyl-prolyl cis-trans isomerase. This Sulfurovum sp. (strain NBC37-1) protein is Trigger factor.